Reading from the N-terminus, the 231-residue chain is Biosynthetic peptidoglycan transglycosylase (231 aa).

The helical transmembrane segment at 10–30 (LLLLGLIGLFLVWQLWLLGWV) threads the bilayer.

It belongs to the glycosyltransferase 51 family.

Its subcellular location is the cell inner membrane. It carries out the reaction [GlcNAc-(1-&gt;4)-Mur2Ac(oyl-L-Ala-gamma-D-Glu-L-Lys-D-Ala-D-Ala)](n)-di-trans,octa-cis-undecaprenyl diphosphate + beta-D-GlcNAc-(1-&gt;4)-Mur2Ac(oyl-L-Ala-gamma-D-Glu-L-Lys-D-Ala-D-Ala)-di-trans,octa-cis-undecaprenyl diphosphate = [GlcNAc-(1-&gt;4)-Mur2Ac(oyl-L-Ala-gamma-D-Glu-L-Lys-D-Ala-D-Ala)](n+1)-di-trans,octa-cis-undecaprenyl diphosphate + di-trans,octa-cis-undecaprenyl diphosphate + H(+). It participates in cell wall biogenesis; peptidoglycan biosynthesis. Peptidoglycan polymerase that catalyzes glycan chain elongation from lipid-linked precursors. The sequence is that of Biosynthetic peptidoglycan transglycosylase from Dechloromonas aromatica (strain RCB).